The following is a 130-amino-acid chain: Glycine cleavage system H protein (130 aa).

One can recognise a Lipoyl-binding domain in the interval 24–106 (IYSVGITEHA…YADGWLFRIR (83 aa)). Lys-65 is subject to N6-lipoyllysine.

Belongs to the GcvH family. The glycine cleavage system is composed of four proteins: P, T, L and H. Requires (R)-lipoate as cofactor.

In terms of biological role, the glycine cleavage system catalyzes the degradation of glycine. The H protein shuttles the methylamine group of glycine from the P protein to the T protein. This chain is Glycine cleavage system H protein, found in Pectobacterium carotovorum subsp. carotovorum (strain PC1).